Consider the following 324-residue polypeptide: Serpentine receptor class delta-30 (324 aa).

A run of 7 helical transmembrane segments spans residues 5 to 25 (IIHSVLSTVGVSLNAFMMYLA), 38 to 58 (AIITIKTGTDILASIMSFFVM), 83 to 103 (ACYVGHMLMLCFLEYNLIWMI), 124 to 144 (VFVAFCLSIPSMVHMAAWFSF), 176 to 196 (ITLITQLFITAFLVVVAYIWI), 227 to 247 (FQVFLPSFIFLGVITFASMFT), and 258 to 278 (AISVIFMFSPICSPFSYILFV). The tract at residues 290-324 (KQPKPHPEMCGPIRSNTRTTSISVTNNSSHLSSAH) is disordered. The segment covering 303-324 (RSNTRTTSISVTNNSSHLSSAH) has biased composition (polar residues).

It belongs to the nematode receptor-like protein srd family.

The protein localises to the membrane. The sequence is that of Serpentine receptor class delta-30 (srd-30) from Caenorhabditis elegans.